The primary structure comprises 369 residues: Histone deacetylase-like amidohydrolase (369 aa).

H143 (proton donor/acceptor) is an active-site residue. Zn(2+)-binding residues include D180, H182, and D268.

The protein belongs to the histone deacetylase family. As to quaternary structure, homotetramer; dimer of dimers. Requires Zn(2+) as cofactor.

With respect to regulation, zinc, and cobalt and nickel at a lesser extent, are able to increase the catalytic activity (2.2-, 1.3- and 1.1-fold respectively) at concentrations of 1 mM. Higher concentrations have an inhibitory effect. Magnesium, manganese and calcium have no effect on activity at concentrations between 0 and 10 mM. At 100 mM, the catalytic activity is increased between 1.2- and 2.1-fold. Hydroxamates like TSA and SAHA inhibit the enzyme. Is also inhibited by azobenzenes, stilbenes and arylazopyrazoles. Exhibits significant levels of protein deacetylase activity comparable to those of eukaryotic HDACs in assays both with fluorogenic peptidic substrates and acetate-radiolabeled histones. Accepts proteins with epsilon-acetylated lysine residues and tritiated-acetate-prelabeled chicken histones as substrates. The natural substrate protein is not yet known. This chain is Histone deacetylase-like amidohydrolase (hdaH), found in Alcaligenes sp. (strain DSM 11172) (Bordetella sp. (strain FB188)).